Here is a 295-residue protein sequence, read N- to C-terminus: GATA transcription factor 18 (295 aa).

Residues 148 to 202 (SLLARRCANCDTTSTPLWRNGPRGPKSLCNACGIRFKKEERRTTAATGNTVVGAA) form a GATA-type zinc finger.

It belongs to the type IV zinc-finger family. Class B subfamily. In terms of assembly, homodimer. Forms heterodimers with GATA19, GATA22 and GATA21. Interacts with JAG. Binds to AGO10/PNH. As to expression, expressed in vegetative and inflorescence shoot apical meristems (SAMs), axillary (SAMs), floral meristems, developing ovules and stamens, vascular tissues, and in the embryo.

The protein localises to the nucleus. Its function is as follows. Transcriptional factor that specifically binds 5'-GATA-3' or 5'-GAT-3' motifs within gene promoters (including its own promoter and GATA21 promoter), thus regulating the expression of genes mostly involved in hormone responses and floral organ specification (including genes regulating hormones responses). Regulates both flower and shoot apical meristem (SAM) development, especially for establishing organ boundaries in shoots and flowers, probably by controlling the number and position of WUS-expressing cells. Coregulates, with AGO10/PNH, the shoot apical meristem (SAM) organization. Regulates floral organ development via the promotion of JAG and NPR5/BOP2 expression. Modulates cytokinin homeostasis in organ boundaries by regulating CKX3 expression. Involved in cell proliferation and differentiation. Required to position the inductive proembryo boundary via the regulation of gene expression and for early embryonic development. Together with GIF1/AN3, mediates cotyledon identity by preventing ectopic root formation through the repression of PLT1 expression. This Arabidopsis thaliana (Mouse-ear cress) protein is GATA transcription factor 18.